We begin with the raw amino-acid sequence, 585 residues long: Exonuclease V, mitochondrial (585 aa).

The N-terminal 26 residues, 1–26 (MLGRTLINKHGFLIHPRRFVHLNDKS), are a transit peptide targeting the mitochondrion. Positions 141, 549, 552, and 558 each coordinate [4Fe-4S] cluster.

The protein belongs to the EXO5 family. As to quaternary structure, monomer. Mg(2+) serves as cofactor. [4Fe-4S] cluster is required as a cofactor.

The protein resides in the mitochondrion. Functionally, single strand DNA specific 5' exonuclease involved in mitochondrial DNA replication and recombination. Releases dinucleotides as main products of catalysis. Has the capacity to slide across 5'double-stranded DNA or 5'RNA sequences and resumes cutting two nucleotides downstream of the double-stranded-to-single-stranded junction or RNA-to-DNA junction, respectively. This is Exonuclease V, mitochondrial (EXO5) from Saccharomyces cerevisiae (strain Lalvin EC1118 / Prise de mousse) (Baker's yeast).